Reading from the N-terminus, the 97-residue chain is Large ribosomal subunit protein bL27 (97 aa).

The segment at 1-21 (MAHKKGVGSSRNGRDSNPKYR) is disordered.

This sequence belongs to the bacterial ribosomal protein bL27 family.

This Gemmatimonas aurantiaca (strain DSM 14586 / JCM 11422 / NBRC 100505 / T-27) protein is Large ribosomal subunit protein bL27.